We begin with the raw amino-acid sequence, 236 residues long: Leucyl/phenylalanyl-tRNA--protein transferase (236 aa).

This sequence belongs to the L/F-transferase family.

The protein localises to the cytoplasm. The catalysed reaction is N-terminal L-lysyl-[protein] + L-leucyl-tRNA(Leu) = N-terminal L-leucyl-L-lysyl-[protein] + tRNA(Leu) + H(+). It catalyses the reaction N-terminal L-arginyl-[protein] + L-leucyl-tRNA(Leu) = N-terminal L-leucyl-L-arginyl-[protein] + tRNA(Leu) + H(+). The enzyme catalyses L-phenylalanyl-tRNA(Phe) + an N-terminal L-alpha-aminoacyl-[protein] = an N-terminal L-phenylalanyl-L-alpha-aminoacyl-[protein] + tRNA(Phe). Functionally, functions in the N-end rule pathway of protein degradation where it conjugates Leu, Phe and, less efficiently, Met from aminoacyl-tRNAs to the N-termini of proteins containing an N-terminal arginine or lysine. In Shewanella putrefaciens (strain CN-32 / ATCC BAA-453), this protein is Leucyl/phenylalanyl-tRNA--protein transferase.